Reading from the N-terminus, the 204-residue chain is Holliday junction branch migration complex subunit RuvA (204 aa).

Positions 1–64 are domain I; it reads MIGRLRGILL…EDAQLLYGFN (64 aa). A domain II region spans residues 65-143; that stretch reads TVKERALFRE…GWGAGDLFTP (79 aa). The segment at 144 to 155 is flexible linker; it reads FTDAAPTDSAAA. Residues 156–204 are domain III; sequence SSNSAEEEAVSALLALGYKPTQASKVVSQIAKPDMSSEQLIREALKSMV.

Belongs to the RuvA family. As to quaternary structure, homotetramer. Forms an RuvA(8)-RuvB(12)-Holliday junction (HJ) complex. HJ DNA is sandwiched between 2 RuvA tetramers; dsDNA enters through RuvA and exits via RuvB. An RuvB hexamer assembles on each DNA strand where it exits the tetramer. Each RuvB hexamer is contacted by two RuvA subunits (via domain III) on 2 adjacent RuvB subunits; this complex drives branch migration. In the full resolvosome a probable DNA-RuvA(4)-RuvB(12)-RuvC(2) complex forms which resolves the HJ.

The protein resides in the cytoplasm. In terms of biological role, the RuvA-RuvB-RuvC complex processes Holliday junction (HJ) DNA during genetic recombination and DNA repair, while the RuvA-RuvB complex plays an important role in the rescue of blocked DNA replication forks via replication fork reversal (RFR). RuvA specifically binds to HJ cruciform DNA, conferring on it an open structure. The RuvB hexamer acts as an ATP-dependent pump, pulling dsDNA into and through the RuvAB complex. HJ branch migration allows RuvC to scan DNA until it finds its consensus sequence, where it cleaves and resolves the cruciform DNA. This chain is Holliday junction branch migration complex subunit RuvA, found in Vibrio parahaemolyticus serotype O3:K6 (strain RIMD 2210633).